We begin with the raw amino-acid sequence, 319 residues long: Homoserine O-acetyltransferase (319 aa).

Cys-142 serves as the catalytic Acyl-thioester intermediate. Lys-163 and Ser-192 together coordinate substrate. The Proton acceptor role is filled by His-235. Glu-237 is a catalytic residue. Arg-249 lines the substrate pocket.

The protein belongs to the MetA family.

Its subcellular location is the cytoplasm. It catalyses the reaction L-homoserine + acetyl-CoA = O-acetyl-L-homoserine + CoA. It participates in amino-acid biosynthesis; L-methionine biosynthesis via de novo pathway; O-acetyl-L-homoserine from L-homoserine: step 1/1. Transfers an acetyl group from acetyl-CoA to L-homoserine, forming acetyl-L-homoserine. This is Homoserine O-acetyltransferase from Lactococcus lactis subsp. cremoris (strain MG1363).